A 542-amino-acid chain; its full sequence is Chloride channel CLIC-like protein 1 (542 aa).

The first 18 residues, 1–18 (MLYSLLLCECLWLITAYA), serve as a signal peptide directing secretion. The Lumenal segment spans residues 19 to 184 (HDDEWIDPTD…EEFFGVDPYN (166 aa)). The helical transmembrane segment at 185-205 (VFMVLLCLLCIVALVATELWT) threads the bilayer. At 206–216 (YVRWYTQLKRV) the chain is on the cytoplasmic side. Residues 217–237 (FFISFLISLGWNWMYLYKLAF) form a helical membrane-spanning segment. Topologically, residues 238 to 329 (AQHQAEVAKM…GEFIKALMKE (92 aa)) are lumenal. Residues 330–350 (IPVLLHIPVLIIMALAVLSFC) traverse the membrane as a helical segment. The Cytoplasmic portion of the chain corresponds to 351 to 542 (YGAGKSVNML…PASTAVEVCG (192 aa)). The segment at 369–394 (EAPQALQAGERRRQQKIDYRPHGGAG) is disordered. Positions 377–389 (GERRRQQKIDYRP) are enriched in basic and acidic residues. Residues S438 and S464 each carry the phosphoserine modification. A disordered region spans residues 452-542 (AREHPKVVPG…PASTAVEVCG (91 aa)). The span at 480–491 (ESTPTESSTESS) shows a compositional bias: low complexity. T482 carries the phosphothreonine modification. A Phosphoserine modification is found at S532.

It belongs to the chloride channel MCLC family. As to quaternary structure, homomultimers. Interacts with mitochondrial protein PIGBOS1 (via C-terminus); the interaction occurs at the mitochondria-associated endoplasmic reticulum (ER) membrane, a zone of contact between the ER and mitochondrial membranes, but does not appear to play a role in ER-mitochondria tethering and is not affected by ER stress. Interacts with CALR.

The protein resides in the endoplasmic reticulum membrane. It catalyses the reaction chloride(in) = chloride(out). It carries out the reaction bromide(in) = bromide(out). The catalysed reaction is nitrate(in) = nitrate(out). The enzyme catalyses fluoride(in) = fluoride(out). Its function is as follows. Anion-selective channel with Ca(2+)-dependent and voltage-independent gating. Permeable to small monovalent anions with selectivity for bromide &gt; chloride &gt; nitrate &gt; fluoride. Operates in the endoplasmic reticulum (ER) membrane where it mediates chloride efflux to compensate for the loss of positive charges from the ER lumen upon Ca(2+) release. Contributes to the maintenance of ER Ca(2+) pools and activation of unfolded protein response to prevent accumulation of misfolded proteins in the ER lumen. Particularly involved in ER homeostasis mechanisms underlying motor neurons and retinal photoreceptors survival. This Bos taurus (Bovine) protein is Chloride channel CLIC-like protein 1 (CLCC1).